The following is a 316-amino-acid chain: Methionyl-tRNA formyltransferase (316 aa).

(6S)-5,6,7,8-tetrahydrofolate is bound at residue 112-115 (GLLP).

Belongs to the Fmt family.

It catalyses the reaction L-methionyl-tRNA(fMet) + (6R)-10-formyltetrahydrofolate = N-formyl-L-methionyl-tRNA(fMet) + (6S)-5,6,7,8-tetrahydrofolate + H(+). Attaches a formyl group to the free amino group of methionyl-tRNA(fMet). The formyl group appears to play a dual role in the initiator identity of N-formylmethionyl-tRNA by promoting its recognition by IF2 and preventing the misappropriation of this tRNA by the elongation apparatus. The sequence is that of Methionyl-tRNA formyltransferase from Chlamydia muridarum (strain MoPn / Nigg).